The chain runs to 90 residues: Probable Fe(2+)-trafficking protein (90 aa).

The protein belongs to the Fe(2+)-trafficking protein family.

Could be a mediator in iron transactions between iron acquisition and iron-requiring processes, such as synthesis and/or repair of Fe-S clusters in biosynthetic enzymes. The sequence is that of Probable Fe(2+)-trafficking protein from Pseudomonas putida (strain W619).